Reading from the N-terminus, the 320-residue chain is Lipoyl synthase (320 aa).

The [4Fe-4S] cluster site is built by Cys67, Cys72, Cys78, Cys93, Cys97, Cys100, and Ser307. The 218-residue stretch at 79 to 296 (FNHGTATFMI…RDKANEMGFE (218 aa)) folds into the Radical SAM core domain.

Belongs to the radical SAM superfamily. Lipoyl synthase family. It depends on [4Fe-4S] cluster as a cofactor.

It is found in the cytoplasm. The enzyme catalyses [[Fe-S] cluster scaffold protein carrying a second [4Fe-4S](2+) cluster] + N(6)-octanoyl-L-lysyl-[protein] + 2 oxidized [2Fe-2S]-[ferredoxin] + 2 S-adenosyl-L-methionine + 4 H(+) = [[Fe-S] cluster scaffold protein] + N(6)-[(R)-dihydrolipoyl]-L-lysyl-[protein] + 4 Fe(3+) + 2 hydrogen sulfide + 2 5'-deoxyadenosine + 2 L-methionine + 2 reduced [2Fe-2S]-[ferredoxin]. Its pathway is protein modification; protein lipoylation via endogenous pathway; protein N(6)-(lipoyl)lysine from octanoyl-[acyl-carrier-protein]: step 2/2. Its function is as follows. Catalyzes the radical-mediated insertion of two sulfur atoms into the C-6 and C-8 positions of the octanoyl moiety bound to the lipoyl domains of lipoate-dependent enzymes, thereby converting the octanoylated domains into lipoylated derivatives. The protein is Lipoyl synthase of Haemophilus influenzae (strain ATCC 51907 / DSM 11121 / KW20 / Rd).